We begin with the raw amino-acid sequence, 147 residues long: Large ribosomal subunit protein uL15 (147 aa).

A disordered region spans residues 1–62 (MDLNTLKPAL…GQMPLQRRLP (62 aa)). The span at 30–39 (TATKGHKGQK) shows a compositional bias: basic residues.

Belongs to the universal ribosomal protein uL15 family. In terms of assembly, part of the 50S ribosomal subunit.

Functionally, binds to the 23S rRNA. This Pelobacter propionicus (strain DSM 2379 / NBRC 103807 / OttBd1) protein is Large ribosomal subunit protein uL15.